Consider the following 273-residue polypeptide: Putative phosphoenolpyruvate synthase regulatory protein (273 aa).

153–160 (GVSRCGKT) serves as a coordination point for ADP.

Belongs to the pyruvate, phosphate/water dikinase regulatory protein family. PSRP subfamily.

The catalysed reaction is [pyruvate, water dikinase] + ADP = [pyruvate, water dikinase]-phosphate + AMP + H(+). It catalyses the reaction [pyruvate, water dikinase]-phosphate + phosphate + H(+) = [pyruvate, water dikinase] + diphosphate. Its function is as follows. Bifunctional serine/threonine kinase and phosphorylase involved in the regulation of the phosphoenolpyruvate synthase (PEPS) by catalyzing its phosphorylation/dephosphorylation. The chain is Putative phosphoenolpyruvate synthase regulatory protein from Yersinia enterocolitica serotype O:8 / biotype 1B (strain NCTC 13174 / 8081).